Reading from the N-terminus, the 368-residue chain is Agmatine deiminase (368 aa).

Residue Cys357 is the Amidino-cysteine intermediate of the active site.

It belongs to the agmatine deiminase family. In terms of assembly, homodimer.

It carries out the reaction agmatine + H2O = N-carbamoylputrescine + NH4(+). It functions in the pathway amine and polyamine biosynthesis; putrescine biosynthesis via agmatine pathway; N-carbamoylputrescine from agmatine: step 1/1. Mediates the hydrolysis of agmatine into N-carbamoylputrescine in the arginine decarboxylase (ADC) pathway of putrescine biosynthesis, a basic polyamine. This is Agmatine deiminase from Pseudomonas putida (strain ATCC 700007 / DSM 6899 / JCM 31910 / BCRC 17059 / LMG 24140 / F1).